The primary structure comprises 149 residues: SsrA-binding protein (149 aa).

The protein belongs to the SmpB family.

It is found in the cytoplasm. Functionally, required for rescue of stalled ribosomes mediated by trans-translation. Binds to transfer-messenger RNA (tmRNA), required for stable association of tmRNA with ribosomes. tmRNA and SmpB together mimic tRNA shape, replacing the anticodon stem-loop with SmpB. tmRNA is encoded by the ssrA gene; the 2 termini fold to resemble tRNA(Ala) and it encodes a 'tag peptide', a short internal open reading frame. During trans-translation Ala-aminoacylated tmRNA acts like a tRNA, entering the A-site of stalled ribosomes, displacing the stalled mRNA. The ribosome then switches to translate the ORF on the tmRNA; the nascent peptide is terminated with the 'tag peptide' encoded by the tmRNA and targeted for degradation. The ribosome is freed to recommence translation, which seems to be the essential function of trans-translation. The sequence is that of SsrA-binding protein from Wolbachia sp. subsp. Brugia malayi (strain TRS).